Reading from the N-terminus, the 138-residue chain is MERTFAMIKPDGVRRGLTPEILARIARKGYRVVGLKQMVIARETAENHYGEHRERPFFGELVDFITGGPVVAIALEGENAIAGWRAMMGATNPANAAPGTIRADFATTTGENVTHGSDSAESAQRELALFFQEGELLA.

Residues Lys-9, Phe-57, Arg-85, Thr-91, Arg-102, and Asn-112 each contribute to the ATP site. His-115 functions as the Pros-phosphohistidine intermediate in the catalytic mechanism.

This sequence belongs to the NDK family. In terms of assembly, homotetramer. It depends on Mg(2+) as a cofactor.

It is found in the cytoplasm. The catalysed reaction is a 2'-deoxyribonucleoside 5'-diphosphate + ATP = a 2'-deoxyribonucleoside 5'-triphosphate + ADP. It carries out the reaction a ribonucleoside 5'-diphosphate + ATP = a ribonucleoside 5'-triphosphate + ADP. Its function is as follows. Major role in the synthesis of nucleoside triphosphates other than ATP. The ATP gamma phosphate is transferred to the NDP beta phosphate via a ping-pong mechanism, using a phosphorylated active-site intermediate. This Deinococcus deserti (strain DSM 17065 / CIP 109153 / LMG 22923 / VCD115) protein is Nucleoside diphosphate kinase.